The sequence spans 48 residues: Large ribosomal subunit protein bL34 (48 aa).

The protein belongs to the bacterial ribosomal protein bL34 family.

This is Large ribosomal subunit protein bL34 from Gloeothece citriformis (strain PCC 7424) (Cyanothece sp. (strain PCC 7424)).